Consider the following 172-residue polypeptide: Adenine phosphoribosyltransferase (172 aa).

It belongs to the purine/pyrimidine phosphoribosyltransferase family. In terms of assembly, homodimer.

Its subcellular location is the cytoplasm. The catalysed reaction is AMP + diphosphate = 5-phospho-alpha-D-ribose 1-diphosphate + adenine. It participates in purine metabolism; AMP biosynthesis via salvage pathway; AMP from adenine: step 1/1. Functionally, catalyzes a salvage reaction resulting in the formation of AMP, that is energically less costly than de novo synthesis. This is Adenine phosphoribosyltransferase from Methanococcus maripaludis (strain C7 / ATCC BAA-1331).